The chain runs to 161 residues: Regulator of ribonuclease activity A (161 aa).

The protein belongs to the RraA family. As to quaternary structure, homotrimer. Binds to both RNA-binding sites in the C-terminal region of Rne and to RhlB.

Its subcellular location is the cytoplasm. In terms of biological role, globally modulates RNA abundance by binding to RNase E (Rne) and regulating its endonucleolytic activity. Can modulate Rne action in a substrate-dependent manner by altering the composition of the degradosome. Modulates RNA-binding and helicase activities of the degradosome. The polypeptide is Regulator of ribonuclease activity A (Yersinia pseudotuberculosis serotype O:1b (strain IP 31758)).